The primary structure comprises 78 residues: MARVCQVTGKRPMSGHHVSHANNKTKRRFLPNLQSRRFWLESENRWIRLRLTNAALRTIDKNGIDVVIADMRARGERI.

The segment at 1–25 (MARVCQVTGKRPMSGHHVSHANNKT) is disordered. Basic residues predominate over residues 13-25 (MSGHHVSHANNKT).

The protein belongs to the bacterial ribosomal protein bL28 family.

The sequence is that of Large ribosomal subunit protein bL28 from Nitrosomonas eutropha (strain DSM 101675 / C91 / Nm57).